The primary structure comprises 328 residues: Malate dehydrogenase (328 aa).

An NAD(+)-binding site is contributed by 12–18 (GAAGQIG). Substrate is bound by residues arginine 93 and arginine 99. NAD(+)-binding positions include asparagine 106, glutamine 113, and 130-132 (TGN). Substrate is bound by residues asparagine 132 and arginine 163. The Proton acceptor role is filled by histidine 188.

It belongs to the LDH/MDH superfamily. MDH type 2 family.

The catalysed reaction is (S)-malate + NAD(+) = oxaloacetate + NADH + H(+). Catalyzes the reversible oxidation of malate to oxaloacetate. This chain is Malate dehydrogenase, found in Kocuria rhizophila (strain ATCC 9341 / DSM 348 / NBRC 103217 / DC2201).